The following is a 566-amino-acid chain: KsdD-like steroid dehydrogenase MT0809 (566 aa).

23–54 (DAIVVGAGLAGLVAACELADRGLRVLILDQEN) is an FAD binding site.

It belongs to the FAD-dependent oxidoreductase 2 family. FAD serves as cofactor.

It functions in the pathway lipid metabolism; steroid biosynthesis. Its function is as follows. Able to catalyze the elimination of the C-1 and C-2 hydrogen atoms of the A-ring from the polycyclic ring structure of 3-ketosteroids. The polypeptide is KsdD-like steroid dehydrogenase MT0809 (Mycobacterium tuberculosis (strain CDC 1551 / Oshkosh)).